Consider the following 118-residue polypeptide: Small ribosomal subunit protein uS10 (118 aa).

S37 bears the Phosphoserine mark.

The protein belongs to the universal ribosomal protein uS10 family. Component of the small ribosomal subunit (SSU). Mature yeast ribosomes consist of a small (40S) and a large (60S) subunit. The 40S small subunit contains 1 molecule of ribosomal RNA (18S rRNA) and at least 33 different proteins. The large 60S subunit contains 3 rRNA molecules (25S, 5.8S and 5S rRNA) and at least 46 different proteins.

The protein localises to the cytoplasm. Its function is as follows. Component of the ribosome, a large ribonucleoprotein complex responsible for the synthesis of proteins in the cell. The small ribosomal subunit (SSU) binds messenger RNAs (mRNAs) and translates the encoded message by selecting cognate aminoacyl-transfer RNA (tRNA) molecules. The large subunit (LSU) contains the ribosomal catalytic site termed the peptidyl transferase center (PTC), which catalyzes the formation of peptide bonds, thereby polymerizing the amino acids delivered by tRNAs into a polypeptide chain. The nascent polypeptides leave the ribosome through a tunnel in the LSU and interact with protein factors that function in enzymatic processing, targeting, and the membrane insertion of nascent chains at the exit of the ribosomal tunnel. The chain is Small ribosomal subunit protein uS10 (rps20) from Schizosaccharomyces pombe (strain 972 / ATCC 24843) (Fission yeast).